A 695-amino-acid polypeptide reads, in one-letter code: Protein MALE DISCOVERER 1 (695 aa).

Positions 1 to 29 (MGCRWNPIGFQFSCFMFLIITLQSRSSLS) are cleaved as a signal peptide. Residues 30-340 (LESEGFVLLK…SKGFKDVWLY (311 aa)) lie on the Extracellular side of the membrane. 2 N-linked (GlcNAc...) asparagine glycosylation sites follow: N56 and N80. LRR repeat units follow at residues 75 to 98 (KVQMLNLSGCSLGGTLAPELSQLS), 99 to 121 (ELRSLILSKNKLSGDIPNEFASF), 123 to 144 (KLEFLDLRDNNLNGVVPPELNK), and 147 to 168 (TPENLLLSGNKFAGFMTVKFLR). N-linked (GlcNAc...) asparagine glycosylation is present at N247. The segment at 302 to 325 (PPLIPPSSPPPLPTNNTIASDPPR) is disordered. Residues 303 to 314 (PLIPPSSPPPLP) show a composition bias toward pro residues. Residue N316 is glycosylated (N-linked (GlcNAc...) asparagine). A helical membrane pass occupies residues 341 to 361 (VVIGVAAFVAMLIIVAVIFFF). Residues 362 to 695 (RKRAVKSIGP…ELEILSSEAT (334 aa)) lie on the Cytoplasmic side of the membrane. A Protein kinase domain is found at 363–668 (KRAVKSIGPW…YVVQQLKEVI (306 aa)). S652 is modified (phosphoserine).

The protein belongs to the protein kinase superfamily. Ser/Thr protein kinase family. Homodimer. Interacts with MIK1, MIK2 and LURE1.2. LURE1.2 enhances the heterodimerization of MDIS1 with MIK1 or MIK2. Post-translationally, phosphorylated by MIK1. In terms of tissue distribution, expressed in pollen tubes and seedlings.

It is found in the cell membrane. It localises to the endomembrane system. It carries out the reaction L-seryl-[protein] + ATP = O-phospho-L-seryl-[protein] + ADP + H(+). The catalysed reaction is L-threonyl-[protein] + ATP = O-phospho-L-threonyl-[protein] + ADP + H(+). In terms of biological role, involved in the pollen tube perception of the female signal. The protein is Protein MALE DISCOVERER 1 of Arabidopsis thaliana (Mouse-ear cress).